Here is a 295-residue protein sequence, read N- to C-terminus: Ribosomal RNA small subunit methyltransferase A (295 aa).

Residues Asn-29, Leu-31, Gly-56, Glu-77, Asp-102, and Asn-128 each coordinate S-adenosyl-L-methionine.

The protein belongs to the class I-like SAM-binding methyltransferase superfamily. rRNA adenine N(6)-methyltransferase family. RsmA subfamily.

Its subcellular location is the cytoplasm. The enzyme catalyses adenosine(1518)/adenosine(1519) in 16S rRNA + 4 S-adenosyl-L-methionine = N(6)-dimethyladenosine(1518)/N(6)-dimethyladenosine(1519) in 16S rRNA + 4 S-adenosyl-L-homocysteine + 4 H(+). Its function is as follows. Specifically dimethylates two adjacent adenosines (A1518 and A1519) in the loop of a conserved hairpin near the 3'-end of 16S rRNA in the 30S particle. May play a critical role in biogenesis of 30S subunits. This is Ribosomal RNA small subunit methyltransferase A from Listeria monocytogenes serovar 1/2a (strain ATCC BAA-679 / EGD-e).